The primary structure comprises 119 residues: Dihydroneopterin aldolase (119 aa).

Residues Glu-21, Tyr-53, and 72–73 (IE) each bind substrate. Lys-99 serves as the catalytic Proton donor/acceptor.

It belongs to the DHNA family.

The enzyme catalyses 7,8-dihydroneopterin = 6-hydroxymethyl-7,8-dihydropterin + glycolaldehyde. It participates in cofactor biosynthesis; tetrahydrofolate biosynthesis; 2-amino-4-hydroxy-6-hydroxymethyl-7,8-dihydropteridine diphosphate from 7,8-dihydroneopterin triphosphate: step 3/4. Catalyzes the conversion of 7,8-dihydroneopterin to 6-hydroxymethyl-7,8-dihydropterin. This Streptococcus pyogenes serotype M3 (strain ATCC BAA-595 / MGAS315) protein is Dihydroneopterin aldolase (folB).